Consider the following 887-residue polypeptide: MAPAAHRDGAAEAVGQRVFHFGKGRSDGNKTMKDLLGGKGANLAEMASIGLSVPPGFTVSTEACQQYQAQKAMPAGLWDEILAALTWVEGNMGAVLGDPRRPLLLSVRSGAAVSMPGMMDTVLNLGLNDHVVAGLAHRSGERFAYDSYRRFLDMFGNVVMDIPHSLFEEKIEAMKAALGLRNDTELTARDLKELVAQYKNVYVEAKGEEFPSDPKKQLHLSVLAVFNSWDSARAKKYRSINQITGLKGTAVNVQCMVFGNMGDTSGTGVLFTRNPSTGERKLYGEFLVNAQGEDVVAGIRTPQDLDTMKDCMPEPYAELVENCKILESHYKEMMDIEFTVQENRLWMLQCRTGKRTGKGAVKIAVDMVNEGLIDRRSAIKMVEPRHLDQLLHPQFESPSSYGDKVIATGLPASPGAAVGQIVFTADDAEAWHAQGKSVILVRTETSPEDVGGMNAAAGILTARGGMTSHAAVVARGWGKCCVAGCSGIRVNDAEKVVLVADKVLCEGEWLSLNGSTGEVILGKLPLSPPALSGDLGEFMSWVDEVKKLKVKANADTPADALTARNNGAEGIGLCRTEHMFFSSDERIKAMRQMIMAETIEHRQIALDRLLPYQRLDFEGIFRAMDGLPVTIRLLDPPLHEFLPEGNVEDMVRLLSSGNVYTQEEILTRIEKLSEVNPMLGFRGCRLGISYPELTAMQARAIFEAAISMTEQGVKVFPEIMVPLIGTPQELAQQVDVIREVAEKVFANAETTISYKIGSMIEVPRAALIADEIAALAEFFSFGTNDLTQMTFGYSRDDVGKFLPTYLSKGILQNDPFEVFDQKGVGELVKVAVERGRKARPDLEVGICGEHGGEPSSVAFFAKVGLNYVSCSPFRVPIARLAAAQVML.

Position 467 is a phosphothreonine; by PDRP1 (Thr467). The Tele-phosphohistidine intermediate role is filled by His469. Residues Arg575, Arg632, Glu761, Gly782, Thr783, Asn784, and Asp785 each coordinate substrate. Glu761 serves as a coordination point for Mg(2+). Residue Asp785 participates in Mg(2+) binding. Cys847 serves as the catalytic Proton donor.

This sequence belongs to the PEP-utilizing enzyme family. The cofactor is Mg(2+).

It is found in the cytoplasm. It carries out the reaction pyruvate + phosphate + ATP = phosphoenolpyruvate + AMP + diphosphate + H(+). Functionally, formation of phosphoenolpyruvate. The polypeptide is Pyruvate, phosphate dikinase 2 (PPDK2) (Oryza sativa subsp. japonica (Rice)).